The sequence spans 335 residues: AA9 family lytic polysaccharide monooxygenase A (335 aa).

Positions 1 to 21 (MSSFITKTVLAALVAAAGVRA) are cleaved as a signal peptide. Positions 22 and 107 each coordinate Cu(2+). Cysteine 77 and cysteine 196 are oxidised to a cystine. Histidine 182 and glutamine 191 together coordinate O2. Tyrosine 193 is a Cu(2+) binding site. A disordered region spans residues 241–335 (PKMNIAGGSS…ARRHARDMMN (95 aa)). Over residues 251–303 (GAAPSTPATPTTGSGSDTPSNTAAPVESAPAESAAPVESAPAAGNGNQNNGGA) the composition is skewed to low complexity. The span at 321–335 (CKAKKARRHARDMMN) shows a compositional bias: basic residues.

The protein belongs to the polysaccharide monooxygenase AA9 family. It depends on Cu(2+) as a cofactor.

Its subcellular location is the secreted. The enzyme catalyses [(1-&gt;4)-beta-D-glucosyl]n+m + reduced acceptor + O2 = 4-dehydro-beta-D-glucosyl-[(1-&gt;4)-beta-D-glucosyl]n-1 + [(1-&gt;4)-beta-D-glucosyl]m + acceptor + H2O.. In terms of biological role, lytic polysaccharide monooxygenase (LPMO) that depolymerizes crystalline and amorphous polysaccharides via the oxidation of scissile alpha- or beta-(1-4)-glycosidic bonds, yielding C1 or C4 oxidation products. Catalysis by LPMOs requires the reduction of the active-site copper from Cu(II) to Cu(I) by a reducing agent and H(2)O(2) or O(2) as a cosubstrate. Is capable of cleaving cellulose, but not chitin. Is also active on tamarind xyloglucan and longer xyloglucan oligosaccharides. Has no activity toward shorter cellooligosaccharides (Glc3-6), as well as toward the xyloglucan-heptamer, birchwood xylan, wheat arabinoxylan, konjac glucomannan, ivory nut mannan, beta-glucan from barley, lichenan from Icelandic moss, starch, and spruce galactoglucomannan. Has unprecedented broad specificity on xyloglucan, cleaving any glycosidicbond in theb-glucan main chain, regardless of xylosyl substitutions. When incubated with a mixture of xyloglucan and cellulose, efficiently attacks the xyloglucan, whereas cellulose conversion is inhibited, suggesting that removal of hemicellulose may be the true function of this LPMO during biomass conversion. This Gibberella zeae (strain ATCC MYA-4620 / CBS 123657 / FGSC 9075 / NRRL 31084 / PH-1) (Wheat head blight fungus) protein is AA9 family lytic polysaccharide monooxygenase A.